A 60-amino-acid chain; its full sequence is Translational regulator CsrA (60 aa).

This sequence belongs to the CsrA/RsmA family. In terms of assembly, homodimer; the beta-strands of each monomer intercalate to form a hydrophobic core, while the alpha-helices form wings that extend away from the core.

It is found in the cytoplasm. A key translational regulator that binds mRNA to regulate translation initiation and/or mRNA stability. Mediates global changes in gene expression, shifting from rapid growth to stress survival by linking envelope stress, the stringent response and the catabolite repression systems. Usually binds in the 5'-UTR; binding at or near the Shine-Dalgarno sequence prevents ribosome-binding, repressing translation, binding elsewhere in the 5'-UTR can activate translation and/or stabilize the mRNA. Its function is antagonized by small RNA(s). The polypeptide is Translational regulator CsrA (Histophilus somni (strain 2336) (Haemophilus somnus)).